The sequence spans 84 residues: Small ribosomal subunit protein bS16 (84 aa).

This sequence belongs to the bacterial ribosomal protein bS16 family.

The polypeptide is Small ribosomal subunit protein bS16 (Cupriavidus pinatubonensis (strain JMP 134 / LMG 1197) (Cupriavidus necator (strain JMP 134))).